Consider the following 376-residue polypeptide: tRNA pseudouridine synthase C (376 aa).

Asp-168 is an active-site residue.

The protein in the C-terminal section; belongs to the pseudouridine synthase RluA family. It to E.coli YqcC in the N-terminal section.

The enzyme catalyses uridine(65) in tRNA = pseudouridine(65) in tRNA. Functionally, responsible for synthesis of pseudouridine from uracil-65 in transfer RNAs. The sequence is that of tRNA pseudouridine synthase C (truC) from Pectobacterium carotovorum subsp. carotovorum (Erwinia carotovora subsp. carotovora).